The primary structure comprises 43 residues: Thymosin beta-b (43 aa).

Basic and acidic residues-rich tracts occupy residues 1 to 25 (MADK…ETQE) and 33 to 43 (ETIEQEKQCEA). The tract at residues 1 to 43 (MADKPDISEVSQFDKTKLKKTETQEKNTLPTKETIEQEKQCEA) is disordered.

It belongs to the thymosin beta family.

It is found in the cytoplasm. The protein resides in the cytoskeleton. Plays an important role in the organization of the cytoskeleton. Binds to and sequesters actin monomers (G actin) and therefore inhibits actin polymerization. This chain is Thymosin beta-b, found in Cyprinus carpio (Common carp).